We begin with the raw amino-acid sequence, 344 residues long: Anthranilate phosphoribosyltransferase (344 aa).

5-phospho-alpha-D-ribose 1-diphosphate-binding positions include Gly85, 88-89 (GD), Thr93, 95-98 (NIST), 113-121 (KHGNRSVSS), and Ser125. Gly85 lines the anthranilate pocket. Position 97 (Ser97) interacts with Mg(2+). Asn116 lines the anthranilate pocket. Arg171 serves as a coordination point for anthranilate. 2 residues coordinate Mg(2+): Asp229 and Glu230.

This sequence belongs to the anthranilate phosphoribosyltransferase family. Homodimer. Mg(2+) is required as a cofactor.

It catalyses the reaction N-(5-phospho-beta-D-ribosyl)anthranilate + diphosphate = 5-phospho-alpha-D-ribose 1-diphosphate + anthranilate. It participates in amino-acid biosynthesis; L-tryptophan biosynthesis; L-tryptophan from chorismate: step 2/5. Catalyzes the transfer of the phosphoribosyl group of 5-phosphorylribose-1-pyrophosphate (PRPP) to anthranilate to yield N-(5'-phosphoribosyl)-anthranilate (PRA). The polypeptide is Anthranilate phosphoribosyltransferase (Shewanella amazonensis (strain ATCC BAA-1098 / SB2B)).